Reading from the N-terminus, the 155-residue chain is Large ribosomal subunit protein uL11 (155 aa).

This sequence belongs to the universal ribosomal protein uL11 family. As to quaternary structure, part of the ribosomal stalk of the 50S ribosomal subunit. Interacts with L10 and the large rRNA to form the base of the stalk. L10 forms an elongated spine to which L12 dimers bind in a sequential fashion forming a multimeric L10(L12)X complex. One or more lysine residues are methylated.

Forms part of the ribosomal stalk which helps the ribosome interact with GTP-bound translation factors. The protein is Large ribosomal subunit protein uL11 of Malacoplasma penetrans (strain HF-2) (Mycoplasma penetrans).